A 336-amino-acid chain; its full sequence is tRNA N6-adenosine threonylcarbamoyltransferase (336 aa).

2 residues coordinate Fe cation: histidine 114 and histidine 118. Substrate contacts are provided by residues 136 to 140 (LVSGG), aspartate 169, glycine 182, aspartate 186, and asparagine 275. Aspartate 302 lines the Fe cation pocket.

It belongs to the KAE1 / TsaD family. Requires Fe(2+) as cofactor.

The protein resides in the cytoplasm. The enzyme catalyses L-threonylcarbamoyladenylate + adenosine(37) in tRNA = N(6)-L-threonylcarbamoyladenosine(37) in tRNA + AMP + H(+). In terms of biological role, required for the formation of a threonylcarbamoyl group on adenosine at position 37 (t(6)A37) in tRNAs that read codons beginning with adenine. Is involved in the transfer of the threonylcarbamoyl moiety of threonylcarbamoyl-AMP (TC-AMP) to the N6 group of A37, together with TsaE and TsaB. TsaD likely plays a direct catalytic role in this reaction. The chain is tRNA N6-adenosine threonylcarbamoyltransferase from Streptococcus agalactiae serotype Ia (strain ATCC 27591 / A909 / CDC SS700).